Here is a 234-residue protein sequence, read N- to C-terminus: uncharacterized protein (234 aa).

Positions 103–211 (LAKKVPFVVC…SHIKIGKSFL (109 aa)) constitute a tRNA-binding domain.

This is an uncharacterized protein from Mycoplasma pneumoniae (strain ATCC 29342 / M129 / Subtype 1) (Mycoplasmoides pneumoniae).